A 152-amino-acid polypeptide reads, in one-letter code: Ribosome maturation factor RimP (152 aa).

This sequence belongs to the RimP family.

It is found in the cytoplasm. Functionally, required for maturation of 30S ribosomal subunits. The sequence is that of Ribosome maturation factor RimP from Pseudothermotoga lettingae (strain ATCC BAA-301 / DSM 14385 / NBRC 107922 / TMO) (Thermotoga lettingae).